The chain runs to 120 residues: MYGVLLVLHGSKIKEWQDVAIQYANLLRKYFDLVEYGFIEFNQPSITEAAKKLASNGVDTIIVVPLLFAAGTHFKRDIPKQLEEIKGVKIMIAEPIGVDERIAEILKERVEEVLRSSTRS.

Histidine 9 functions as the Proton acceptor in the catalytic mechanism. Position 9 (histidine 9) interacts with Co(2+). Substrate is bound by residues glutamine 43 and phenylalanine 68–histidine 73. Histidine 73 is a Co(2+) binding site.

The protein belongs to the CbiX family. CbiXS subfamily. As to quaternary structure, homotetramer; dimer of dimers.

The catalysed reaction is Co-sirohydrochlorin + 2 H(+) = sirohydrochlorin + Co(2+). It participates in cofactor biosynthesis; adenosylcobalamin biosynthesis; cob(II)yrinate a,c-diamide from sirohydrochlorin (anaerobic route): step 1/10. Catalyzes the insertion of Co(2+) into sirohydrochlorin as part of the anaerobic pathway to cobalamin biosynthesis. The polypeptide is Sirohydrochlorin cobaltochelatase (Sulfurisphaera tokodaii (strain DSM 16993 / JCM 10545 / NBRC 100140 / 7) (Sulfolobus tokodaii)).